Reading from the N-terminus, the 364-residue chain is MEKLNLLGFLIITLNCNVTIMGMIWLIVEVLLRMLVVVLAGSPIYEDEQERFICNTLQPGCANVCYDLFSPVSPLRFWLVQSLALLLPSVVFGTYTLHRGAKLAAVGGACRPQVPDLSTAYLVHLLLRMLLEAGLAFLHYFLFGFSVPARVSCSHVPCSGAVDCYVSRPTEKSLLILFFWAVSALSFLLSLADLLWILPRRKTLRTTQWVNGEARPVCEVPAPPPCLLQNPQGYLSQGQVDQEDRQEEQVVPEFPCMWTAGQSDNSNVGQACVSGLLEHSDQDASEATSSAGDRLTVAHTAHELRFHRETSLDLGGKNTQADELSLATQSHLARHSSASKPQAPCRLTTSGSAPHLRTKKSEWV.

Over 1–19 the chain is Cytoplasmic; sequence MEKLNLLGFLIITLNCNVT. The chain crosses the membrane as a helical span at residues 20 to 40; that stretch reads IMGMIWLIVEVLLRMLVVVLA. At 41-76 the chain is on the extracellular side; it reads GSPIYEDEQERFICNTLQPGCANVCYDLFSPVSPLR. Residues 77 to 97 form a helical membrane-spanning segment; it reads FWLVQSLALLLPSVVFGTYTL. The Cytoplasmic portion of the chain corresponds to 98 to 128; that stretch reads HRGAKLAAVGGACRPQVPDLSTAYLVHLLLR. Residues 129–149 form a helical membrane-spanning segment; sequence MLLEAGLAFLHYFLFGFSVPA. Over 150-173 the chain is Extracellular; that stretch reads RVSCSHVPCSGAVDCYVSRPTEKS. Residues 174–194 traverse the membrane as a helical segment; the sequence is LLILFFWAVSALSFLLSLADL. Topologically, residues 195–364 are cytoplasmic; that stretch reads LWILPRRKTL…HLRTKKSEWV (170 aa). Residues 331–340 show a composition bias toward polar residues; that stretch reads HLARHSSASK. Residues 331–364 are disordered; it reads HLARHSSASKPQAPCRLTTSGSAPHLRTKKSEWV.

Belongs to the connexin family. Delta-type subfamily. In terms of assembly, a connexon is composed of a hexamer of connexins.

The protein localises to the cell membrane. It is found in the cell junction. It localises to the gap junction. In terms of biological role, one gap junction consists of a cluster of closely packed pairs of transmembrane channels, the connexons, through which materials of low MW diffuse from one cell to a neighboring cell. The sequence is that of Gap junction delta-4 protein (Gjd4) from Mus musculus (Mouse).